A 179-amino-acid chain; its full sequence is Large ribosomal subunit protein uL5 (179 aa).

Belongs to the universal ribosomal protein uL5 family. Part of the 50S ribosomal subunit; part of the 5S rRNA/L5/L18/L25 subcomplex. Contacts the 5S rRNA and the P site tRNA. Forms a bridge to the 30S subunit in the 70S ribosome.

Its function is as follows. This is one of the proteins that bind and probably mediate the attachment of the 5S RNA into the large ribosomal subunit, where it forms part of the central protuberance. In the 70S ribosome it contacts protein S13 of the 30S subunit (bridge B1b), connecting the 2 subunits; this bridge is implicated in subunit movement. Contacts the P site tRNA; the 5S rRNA and some of its associated proteins might help stabilize positioning of ribosome-bound tRNAs. This Aeromonas salmonicida (strain A449) protein is Large ribosomal subunit protein uL5.